The sequence spans 315 residues: Calumenin (315 aa).

The first 19 residues, 1–19 (MDLRQFLMCLSLCTAFALS), serve as a signal peptide directing secretion. Serine 44 carries the phosphoserine modification. Phosphotyrosine is present on tyrosine 47. Threonine 65 carries the phosphothreonine modification. EF-hand domains lie at 68 to 103 (ESKERLGMIVDKIDADKDGFVTEGELKSWIKHAQKK), 104 to 139 (YIYDNVENQWQEFDLNQDGLISWDEYRNVTYGTYLD), 151 to 186 (QMMVRDERRFKMADKDGDLIATKEEFTAFLHPEEYD), 188 to 223 (MKDIVVQEPMEDIDKNADGFIDLEEYIGDMYSHDGN), 229 to 264 (WVKTEREQFVEFRDKNRDGKMDKEETKDWILPSDYD), and 265 to 300 (HAEAEARHLVYESDQNKDGKLTKEEIVDKYDLFVGS). A Phosphoserine modification is found at serine 69. Aspartate 81, aspartate 83, aspartate 85, glutamate 92, aspartate 117, asparagine 119, aspartate 121, and glutamate 128 together coordinate Ca(2+). N-linked (GlcNAc...) asparagine glycosylation occurs at asparagine 131. Aspartate 164 is a binding site for Ca(2+). The residue at position 165 (lysine 165) is an N6-acetyllysine. Ca(2+) is bound by residues aspartate 166, aspartate 168, glutamate 175, aspartate 201, asparagine 203, aspartate 205, glutamate 212, aspartate 242, asparagine 244, aspartate 246, lysine 248, and glutamate 253. The residue at position 254 (threonine 254) is a Phosphothreonine. A phosphoserine mark is found at serine 261 and serine 277. Positions 278, 280, 282, 284, and 289 each coordinate Ca(2+). Residues 312–315 (HDEF) carry the Prevents secretion from ER motif.

It belongs to the CREC family. Interacts with GGCX.

It is found in the endoplasmic reticulum membrane. The protein localises to the golgi apparatus. It localises to the secreted. The protein resides in the melanosome. Its subcellular location is the sarcoplasmic reticulum lumen. Functionally, involved in regulation of vitamin K-dependent carboxylation of multiple N-terminal glutamate residues. Seems to inhibit gamma-carboxylase GGCX. Binds 7 calcium ions with a low affinity. This is Calumenin (CALU) from Bos taurus (Bovine).